Here is a 238-residue protein sequence, read N- to C-terminus: Monocyte to macrophage differentiation factor (238 aa).

Over 1-28 the chain is Cytoplasmic; that stretch reads MRFKNRFQRFMNHRAPANGRYKPTCYEH. The chain crosses the membrane as a helical span at residues 29-49; that stretch reads AANCYTHAFLIVPAIVGSALL. At 50–61 the chain is on the lumenal side; that stretch reads HRLSDDCWEKIT. Residues 62–82 form a helical membrane-spanning segment; that stretch reads AWIYGMGLCALFIVSTVFHIV. Residues 83–101 are Cytoplasmic-facing; it reads SWKKSHLRTVEHCFHMCDR. Residues 102–122 traverse the membrane as a helical segment; sequence MVIYFFIAASYAPWLNLRELG. The Lumenal segment spans residues 123 to 124; it reads PL. A helical membrane pass occupies residues 125–145; it reads ASHMRWFIWLMAAGGTIYVFL. The Cytoplasmic portion of the chain corresponds to 146–151; that stretch reads YHEKYK. A helical transmembrane segment spans residues 152-172; sequence VVELFFYLTMGFSPALVVTSM. The Lumenal portion of the chain corresponds to 173–174; sequence NN. A helical transmembrane segment spans residues 175–195; the sequence is TDGLQELACGGLIYCLGVVFF. At 196–198 the chain is on the cytoplasmic side; sequence KSD. A helical membrane pass occupies residues 199-219; it reads GIIPFAHAIWHLFVATAAAVH. The Lumenal segment spans residues 220 to 238; that stretch reads YYAIWKYLYRSPTDFMRHL.

Belongs to the ADIPOR family. As to expression, exhibits relatively ubiquitous expression with preferential expression in mature (in vitro differentiated) macrophages.

Its subcellular location is the late endosome membrane. It is found in the lysosome membrane. Involved in the dynamics of lysosomal membranes associated with microglial activation following brain lesion. This Homo sapiens (Human) protein is Monocyte to macrophage differentiation factor.